We begin with the raw amino-acid sequence, 198 residues long: Peptidyl-tRNA hydrolase (198 aa).

Y15 serves as a coordination point for tRNA. H20 functions as the Proton acceptor in the catalytic mechanism. 3 residues coordinate tRNA: F66, N68, and N114.

It belongs to the PTH family. As to quaternary structure, monomer.

The protein resides in the cytoplasm. The catalysed reaction is an N-acyl-L-alpha-aminoacyl-tRNA + H2O = an N-acyl-L-amino acid + a tRNA + H(+). Its function is as follows. Hydrolyzes ribosome-free peptidyl-tRNAs (with 1 or more amino acids incorporated), which drop off the ribosome during protein synthesis, or as a result of ribosome stalling. Catalyzes the release of premature peptidyl moieties from peptidyl-tRNA molecules trapped in stalled 50S ribosomal subunits, and thus maintains levels of free tRNAs and 50S ribosomes. This chain is Peptidyl-tRNA hydrolase, found in Cupriavidus taiwanensis (strain DSM 17343 / BCRC 17206 / CCUG 44338 / CIP 107171 / LMG 19424 / R1) (Ralstonia taiwanensis (strain LMG 19424)).